A 280-amino-acid chain; its full sequence is Shikimate dehydrogenase (NADP(+)) (280 aa).

Residues Ser-20–Ser-22 and Thr-67 each bind shikimate. The active-site Proton acceptor is Lys-71. NADP(+) is bound at residue Glu-83. Asn-92 and Asp-107 together coordinate shikimate. NADP(+) contacts are provided by residues Gly-131 to Ala-135, Asn-155 to Lys-160, and Leu-224. Position 226 (Tyr-226) interacts with shikimate. Gly-247 is a binding site for NADP(+).

This sequence belongs to the shikimate dehydrogenase family. Homodimer.

The enzyme catalyses shikimate + NADP(+) = 3-dehydroshikimate + NADPH + H(+). The protein operates within metabolic intermediate biosynthesis; chorismate biosynthesis; chorismate from D-erythrose 4-phosphate and phosphoenolpyruvate: step 4/7. Functionally, involved in the biosynthesis of the chorismate, which leads to the biosynthesis of aromatic amino acids. Catalyzes the reversible NADPH linked reduction of 3-dehydroshikimate (DHSA) to yield shikimate (SA). The chain is Shikimate dehydrogenase (NADP(+)) from Caldanaerobacter subterraneus subsp. tengcongensis (strain DSM 15242 / JCM 11007 / NBRC 100824 / MB4) (Thermoanaerobacter tengcongensis).